We begin with the raw amino-acid sequence, 476 residues long: ATP synthase subunit beta, chloroplastic (476 aa).

155 to 162 serves as a coordination point for ATP; sequence GGAGVGKT.

It belongs to the ATPase alpha/beta chains family. As to quaternary structure, F-type ATPases have 2 components, CF(1) - the catalytic core - and CF(0) - the membrane proton channel. CF(1) has five subunits: alpha(3), beta(3), gamma(1), delta(1), epsilon(1). CF(0) has four main subunits: a(1), b(1), b'(1) and c(9-12).

The protein resides in the plastid. It localises to the chloroplast thylakoid membrane. It carries out the reaction ATP + H2O + 4 H(+)(in) = ADP + phosphate + 5 H(+)(out). In terms of biological role, produces ATP from ADP in the presence of a proton gradient across the membrane. The catalytic sites are hosted primarily by the beta subunits. The sequence is that of ATP synthase subunit beta, chloroplastic from Emiliania huxleyi (Coccolithophore).